The chain runs to 303 residues: Oxygen-dependent coproporphyrinogen-III oxidase (303 aa).

Ser93 contributes to the substrate binding site. A divalent metal cation-binding residues include His97 and His107. Residue His107 is the Proton donor of the active site. Residue 109–111 (NVR) participates in substrate binding. Residues His146 and His176 each contribute to the a divalent metal cation site. An important for dimerization region spans residues 241–276 (YVEFNLVYDRGTLFGLQSGGRTESILMSLPPQVRWG). 259-261 (GGR) provides a ligand contact to substrate.

Belongs to the aerobic coproporphyrinogen-III oxidase family. Homodimer. A divalent metal cation serves as cofactor.

The protein resides in the cytoplasm. It carries out the reaction coproporphyrinogen III + O2 + 2 H(+) = protoporphyrinogen IX + 2 CO2 + 2 H2O. It functions in the pathway porphyrin-containing compound metabolism; protoporphyrin-IX biosynthesis; protoporphyrinogen-IX from coproporphyrinogen-III (O2 route): step 1/1. In terms of biological role, involved in the heme biosynthesis. Catalyzes the aerobic oxidative decarboxylation of propionate groups of rings A and B of coproporphyrinogen-III to yield the vinyl groups in protoporphyrinogen-IX. The sequence is that of Oxygen-dependent coproporphyrinogen-III oxidase from Pseudomonas putida (strain ATCC 700007 / DSM 6899 / JCM 31910 / BCRC 17059 / LMG 24140 / F1).